The sequence spans 94 residues: MLDLFRVFSNEAKTSKSVAKERLKLVLVHDRVDCSPQLLEMIKTDILKVIANYAEIEDDGLEIKMSKCRGEHDDKPVSALVANIPLKNIKDRCM.

It belongs to the MinE family.

In terms of biological role, prevents the cell division inhibition by proteins MinC and MinD at internal division sites while permitting inhibition at polar sites. This ensures cell division at the proper site by restricting the formation of a division septum at the midpoint of the long axis of the cell. The polypeptide is Cell division topological specificity factor (Clostridioides difficile (strain 630) (Peptoclostridium difficile)).